A 150-amino-acid chain; its full sequence is 3-dehydroquinate dehydratase (150 aa).

Residue Tyr-26 is the Proton acceptor of the active site. 3 residues coordinate substrate: Asn-77, His-83, and Asp-90. The active-site Proton donor is the His-103. Substrate-binding positions include 104–105 and Arg-114; that span reads LS.

Belongs to the type-II 3-dehydroquinase family. As to quaternary structure, homododecamer.

The catalysed reaction is 3-dehydroquinate = 3-dehydroshikimate + H2O. It functions in the pathway metabolic intermediate biosynthesis; chorismate biosynthesis; chorismate from D-erythrose 4-phosphate and phosphoenolpyruvate: step 3/7. Catalyzes a trans-dehydration via an enolate intermediate. The sequence is that of 3-dehydroquinate dehydratase from Pectobacterium carotovorum subsp. carotovorum (strain PC1).